Here is a 156-residue protein sequence, read N- to C-terminus: Transcriptional repressor NrdR (156 aa).

A zinc finger spans residues 3–34 (CPFCSETDTKVIDSRLVADGAQVRRRRECLTC). Residues 49 to 139 (PRVIKQDGTR…VYRSFQDLSE (91 aa)) enclose the ATP-cone domain.

This sequence belongs to the NrdR family. It depends on Zn(2+) as a cofactor.

Functionally, negatively regulates transcription of bacterial ribonucleotide reductase nrd genes and operons by binding to NrdR-boxes. This is Transcriptional repressor NrdR from Saccharophagus degradans (strain 2-40 / ATCC 43961 / DSM 17024).